The primary structure comprises 495 residues: Glutamate--tRNA ligase 1 (495 aa).

A 'HIGH' region motif is present at residues 10–20 (PSPTGALHMGG). A 'KMSKS' region motif is present at residues 251–255 (KLSKR). Lys254 lines the ATP pocket.

Belongs to the class-I aminoacyl-tRNA synthetase family. Glutamate--tRNA ligase type 1 subfamily. Monomer.

It localises to the cytoplasm. The enzyme catalyses tRNA(Glu) + L-glutamate + ATP = L-glutamyl-tRNA(Glu) + AMP + diphosphate. Catalyzes the attachment of glutamate to tRNA(Glu) in a two-step reaction: glutamate is first activated by ATP to form Glu-AMP and then transferred to the acceptor end of tRNA(Glu). This chain is Glutamate--tRNA ligase 1, found in Syntrophomonas wolfei subsp. wolfei (strain DSM 2245B / Goettingen).